The primary structure comprises 604 residues: MLRTHSLGELNASLIGQTVTVTGWVARRRDHGGVAFVDLRDASGFAQVVVRDEADFDPLRNEWVLQVTGTVERRPEGNENPNLPSGEIELIAETVTVLNTAAALPFQVDEHVEVGEEARLRHRYLDLRRPQPSRIMRLRSEVNRTARELLHGEGFVEVETPTLTRSTPEGARDFLVPARLAPGSWYALPQSPQLFKQLLQVGGIEKYYQIARCYRDEDFRADRQPEFTQLDIEASFVEQDDVIALGEKIVKALWALVGVDVPTPIRRMTYAEAMEKYGSDKPDLRFGLELTDLTEYFKDTPFRVFQNEYVGAVVMPGGASQARRTLDAWQEWAKQRGAKGLAYVLIQEDGELTGPVSKNISEEEKAGLAAAVGANPGDCVFFAAGKPKESRALLGAARVEIGRRCGLFTDAGDGVAAKDADWAFVWVVDAPMFEPAADAVASGDVAVGAGAWTAVHHAFTSPKPEFADTFDADPGSALAYAYDIVCNGNEIGGGSIRIHRRDVQERVFEVMGLSPEEANEKFGFLLEGFKYGAPPHGGIAFGWDRVVALLAGTDSIREVIAFPKTGGGFDPLTGAPAPITAQQRKEAGVDAQPEPKQAEAEPEA.

L-aspartate is bound at residue Glu169. The tract at residues 193 to 196 is aspartate; sequence QLFK. Residue Arg215 coordinates L-aspartate. Residues 215 to 217 and Gln224 each bind ATP; that span reads RDE. Residue His456 participates in L-aspartate binding. Glu490 contributes to the ATP binding site. Arg497 is a binding site for L-aspartate. An ATP-binding site is contributed by 542 to 545; that stretch reads GWDR. The tract at residues 571–604 is disordered; it reads PLTGAPAPITAQQRKEAGVDAQPEPKQAEAEPEA.

Belongs to the class-II aminoacyl-tRNA synthetase family. Type 1 subfamily. In terms of assembly, homodimer.

It localises to the cytoplasm. It catalyses the reaction tRNA(Asx) + L-aspartate + ATP = L-aspartyl-tRNA(Asx) + AMP + diphosphate. Functionally, aspartyl-tRNA synthetase with relaxed tRNA specificity since it is able to aspartylate not only its cognate tRNA(Asp) but also tRNA(Asn). Reaction proceeds in two steps: L-aspartate is first activated by ATP to form Asp-AMP and then transferred to the acceptor end of tRNA(Asp/Asn). In Micrococcus luteus (strain ATCC 4698 / DSM 20030 / JCM 1464 / CCM 169 / CCUG 5858 / IAM 1056 / NBRC 3333 / NCIMB 9278 / NCTC 2665 / VKM Ac-2230) (Micrococcus lysodeikticus), this protein is Aspartate--tRNA(Asp/Asn) ligase.